A 259-amino-acid polypeptide reads, in one-letter code: MAKYQGEVQSLKLDDDSVIEGVSDQVLVAVVVSLALIATLVYALFSRNAHQNIHPENQELVRVLREQLQTEQDAPAAARQQFYTDMYCPICLHQASLPVETNCGHLFCGTCIVAYWRYGSWLGAISCPICRQTVTLLLPVFGENDQSQDVVSLHQDISDYNRRFSGQPRSIMERIMDLPTLLRHAFREMFSVGGLFWMFRIRIILCLMGAFFYLISPLDFVPEALFGILGFLDDFFVIFLLLIYISIMYREVITQRLNR.

The Lumenal portion of the chain corresponds to 1-25; it reads MAKYQGEVQSLKLDDDSVIEGVSDQ. Residues 26-46 traverse the membrane as a helical segment; that stretch reads VLVAVVVSLALIATLVYALFS. The Cytoplasmic segment spans residues 47–202; sequence RNAHQNIHPE…GGLFWMFRIR (156 aa). Residues 88-131 form an RING-type zinc finger; that stretch reads CPICLHQASLPVETNCGHLFCGTCIVAYWRYGSWLGAISCPICR. Residues 203–223 form a helical membrane-spanning segment; that stretch reads IILCLMGAFFYLISPLDFVPE. Residue alanine 224 is a topological domain, lumenal. Residues 225–245 form a helical membrane-spanning segment; the sequence is LFGILGFLDDFFVIFLLLIYI. At 246-259 the chain is on the cytoplasmic side; it reads SIMYREVITQRLNR.

Constitutively associated with the ERLIN1/ERLIN 2 complex. Interacts with activated ITPR1.

It is found in the endoplasmic reticulum membrane. The catalysed reaction is S-ubiquitinyl-[E2 ubiquitin-conjugating enzyme]-L-cysteine + [acceptor protein]-L-lysine = [E2 ubiquitin-conjugating enzyme]-L-cysteine + N(6)-ubiquitinyl-[acceptor protein]-L-lysine.. Its pathway is protein modification; protein ubiquitination. E3 ubiquitin-protein ligase. Plays an essential role in stimulus-induced inositol 1,4,5-trisphosphate receptor type 1 (ITPR1) ubiquitination and degradation via the endoplasmic reticulum-associated degradation (ERAD) pathway. Also involved in ITPR1 turnover in resting cells. Selectively inhibits the TLR3-triggered innate immune response by promoting the 'Lys-48'-linked polyubiquitination and degradation of TLR3. In Bos taurus (Bovine), this protein is E3 ubiquitin-protein ligase RNF170 (RNF170).